The primary structure comprises 309 residues: Homoserine O-succinyltransferase (309 aa).

The active-site Acyl-thioester intermediate is Cys142. Residues Lys163 and Ser192 each contribute to the substrate site. Catalysis depends on His235, which acts as the Proton acceptor. Residue Glu237 is part of the active site. Arg249 serves as a coordination point for substrate.

Belongs to the MetA family. Homodimer.

It is found in the cytoplasm. The enzyme catalyses L-homoserine + succinyl-CoA = O-succinyl-L-homoserine + CoA. It participates in amino-acid biosynthesis; L-methionine biosynthesis via de novo pathway; O-succinyl-L-homoserine from L-homoserine: step 1/1. Its function is as follows. Transfers a succinyl group from succinyl-CoA to L-homoserine, forming succinyl-L-homoserine. The polypeptide is Homoserine O-succinyltransferase (Escherichia coli (strain ATCC 8739 / DSM 1576 / NBRC 3972 / NCIMB 8545 / WDCM 00012 / Crooks)).